Reading from the N-terminus, the 1779-residue chain is 5-methyl-1-naphthoate synthase (1779 aa).

The region spanning 10 to 433 is the Ketosynthase family 3 (KS3) domain; it reads VEPLAVIGMS…GSIAHAVLQQ (424 aa). Active-site for beta-ketoacyl synthase activity residues include C181, H316, and H356. The tract at residues 902–1027 is N-terminal hotdog fold; sequence HTLIGARTTV…ATVVHEPEVG (126 aa). The PKS/mFAS DH domain occupies 902–1180; the sequence is HTLIGARTTV…YVKVQDIGSG (279 aa). Residues 1042 to 1180 are C-terminal hotdog fold; it reads PVSWTWAKVD…YVKVQDIGSG (139 aa). Residues 1664–1742 form the Carrier domain; the sequence is GELPELVLKV…ALAEFLAAEV (79 aa). S1702 carries the O-(pantetheine 4'-phosphoryl)serine modification. Residues 1746–1771 form a disordered region; the sequence is TADAEETDPVAGLPAPQQGSGTAEQL.

It catalyses the reaction 5 malonyl-CoA + acetyl-CoA + 3 NADPH + 7 H(+) = 5-methyl-1-naphthoate + 5 CO2 + 3 NADP(+) + 6 CoA + 4 H2O. It participates in antibiotic biosynthesis. Functionally, polyketide synthase that catalyzes the biosynthesis of the bicyclic aromatic compound 5-methyl-1-naphthoate in the biosynthesis of the antitumor antibiotic azinomycin B. The protein is 5-methyl-1-naphthoate synthase of Streptomyces sahachiroi.